Reading from the N-terminus, the 364-residue chain is Acetylserotonin O-methyltransferase 1 (364 aa).

S-adenosyl-L-homocysteine contacts are provided by Gly208, Asp231, Asp251, and Lys265. The active-site Proton acceptor is His269. Active-site residues include Glu300 and Glu330.

The protein belongs to the class I-like SAM-binding methyltransferase superfamily. Cation-independent O-methyltransferase family. As to quaternary structure, homodimer. In terms of tissue distribution, expressed in leaves, stems and flowers.

The protein localises to the cytoplasm. The catalysed reaction is N-acetylserotonin + S-adenosyl-L-methionine = melatonin + S-adenosyl-L-homocysteine + H(+). Its pathway is aromatic compound metabolism; melatonin biosynthesis; melatonin from serotonin: step 1/2. Functionally, methyltransferase which catalyzes the transfer of a methyl group onto N-acetylserotonin, producing melatonin (N-acetyl-5-methoxytryptamine). This is Acetylserotonin O-methyltransferase 1 from Oryza sativa subsp. japonica (Rice).